Reading from the N-terminus, the 440-residue chain is Ribosomal protein uS12 methylthiotransferase RimO (440 aa).

One can recognise an MTTase N-terminal domain in the interval 8-124 (TSVFLLSLGC…VLDALGARYH (117 aa)). 6 residues coordinate [4Fe-4S] cluster: Cys17, Cys53, Cys87, Cys148, Cys152, and Cys155. Residues 134–363 (LTPPHSSYLK…MELQEEIARK (230 aa)) enclose the Radical SAM core domain. In terms of domain architecture, TRAM spans 366 to 437 (EAFVGSLMTV…AYELHGTVES (72 aa)).

The protein belongs to the methylthiotransferase family. RimO subfamily. The cofactor is [4Fe-4S] cluster.

It is found in the cytoplasm. The catalysed reaction is L-aspartate(89)-[ribosomal protein uS12]-hydrogen + (sulfur carrier)-SH + AH2 + 2 S-adenosyl-L-methionine = 3-methylsulfanyl-L-aspartate(89)-[ribosomal protein uS12]-hydrogen + (sulfur carrier)-H + 5'-deoxyadenosine + L-methionine + A + S-adenosyl-L-homocysteine + 2 H(+). Its function is as follows. Catalyzes the methylthiolation of an aspartic acid residue of ribosomal protein uS12. The chain is Ribosomal protein uS12 methylthiotransferase RimO from Chlorobium luteolum (strain DSM 273 / BCRC 81028 / 2530) (Pelodictyon luteolum).